A 469-amino-acid chain; its full sequence is Transcription factor SOX-10 (469 aa).

Disordered stretches follow at residues 1-70 (MAEE…DDDK), 163-203 (LRMQ…QGGA), 215-278 (LDHR…DFGN), 357-378 (AQVKTETAGPQGPSHYSDQPST), and 436-469 (RPLYTAISDPSPSGPQSHSPTHWEQPVYTTLSRP). A compositionally biased stretch (low complexity) spans 23–32 (LSPGSAPSLG). Serine 24 is modified (phosphoserine). The span at 33 to 44 (PDGGGGGGGGSG) shows a compositional bias: gly residues. The tract at residues 65–105 (EADDDKFPVCIREAVSQVLSGYDWTLVPMPVRVNGASKSKP) is dimerization (DIM). A DNA-binding region (HMG box) is located at residues 107–175 (VKRPMNAFMV…QHKKDHPDYK (69 aa)). 2 stretches are compositionally biased toward basic and acidic residues: residues 163–176 (LRMQHKKDHPDYKY) and 257–274 (ADPKRDGRSMGEGGKPHI). A transactivation domain (TAM) region spans residues 231–313 (PEHPSGQSHG…LPPNGHPGHV (83 aa)). Residues 356 to 469 (KAQVKTETAG…QPVYTTLSRP (114 aa)) are transactivation domain (TAC). Positions 443-469 (SDPSPSGPQSHSPTHWEQPVYTTLSRP) are enriched in polar residues.

In terms of assembly, monomer. Interacts with ARMCX3 at the mitochondrial outer membrane surface. Interacts with PAX3.

It is found in the cytoplasm. The protein localises to the nucleus. Its subcellular location is the mitochondrion outer membrane. Functionally, transcription factor that plays a central role in developing and mature glia. Specifically activates expression of myelin genes, during oligodendrocyte (OL) maturation, such as DUSP15 and MYRF, thereby playing a central role in oligodendrocyte maturation and CNS myelination. Once induced, MYRF cooperates with SOX10 to implement the myelination program. Transcriptional activator of MITF, acting synergistically with PAX3. Transcriptional activator of MBP, via binding to the gene promoter. This chain is Transcription factor SOX-10 (SOX10), found in Sus scrofa (Pig).